The chain runs to 615 residues: Angiotensin-converting enzyme (615 aa).

The first 17 residues, 1–17, serve as a signal peptide directing secretion; sequence MRLFLLALLATLAVTQA. In terms of domain architecture, Peptidase M2 spans 19-607; the sequence is VKEEIQAKEY…IKNNVHIGWT (589 aa). A glycan (N-linked (GlcNAc...) asparagine) is linked at Asn-53. A disulfide bond links Cys-133 and Cys-141. Asn-196 and Asn-311 each carry an N-linked (GlcNAc...) asparagine glycan. Cysteines 336 and 354 form a disulfide. His-367 is a Zn(2+) binding site. Glu-368 functions as the Proton acceptor in the catalytic mechanism. Zn(2+)-binding residues include His-371 and Glu-395. The Proton donor role is filled by His-497. Cys-522 and Cys-540 are oxidised to a cystine.

It belongs to the peptidase M2 family. Zn(2+) serves as cofactor. Glycosylated. Expressed in vesicular structures in spermatocytes and early spermatids (at protein level).

It is found in the secreted. Its subcellular location is the extracellular space. It carries out the reaction Release of a C-terminal dipeptide, oligopeptide-|-Xaa-Yaa, when Xaa is not Pro, and Yaa is neither Asp nor Glu. Thus, conversion of angiotensin I to angiotensin II, with increase in vasoconstrictor activity, but no action on angiotensin II.. With respect to regulation, inhibited by captopril and, to a lesser extent, by lisinopril, trandolaprilat, fosinoprilat and enalaprilat. In terms of biological role, may be involved in the specific maturation or degradation of a number of bioactive peptides. May play a role in the contractions of the heart, gut and testes, and in spermatid differentiation. This Drosophila melanogaster (Fruit fly) protein is Angiotensin-converting enzyme (Ance).